A 354-amino-acid chain; its full sequence is FAD synthetase 1, chloroplastic (354 aa).

The transit peptide at M1–S75 directs the protein to the chloroplast. Residues S228 to R248 are disordered.

The cofactor is Mg(2+).

The protein localises to the plastid. The protein resides in the chloroplast. The enzyme catalyses FMN + ATP + H(+) = FAD + diphosphate. It participates in cofactor biosynthesis; FAD biosynthesis; FAD from FMN: step 1/1. Functionally, catalyzes the adenylation of flavin mononucleotide (FMN) to form flavin adenine dinucleotide (FAD) coenzyme. This chain is FAD synthetase 1, chloroplastic, found in Arabidopsis thaliana (Mouse-ear cress).